A 208-amino-acid polypeptide reads, in one-letter code: High frequency lysogenization protein HflD homolog (208 aa).

Belongs to the HflD family.

The protein resides in the cytoplasm. The protein localises to the cell inner membrane. This is High frequency lysogenization protein HflD homolog from Photorhabdus laumondii subsp. laumondii (strain DSM 15139 / CIP 105565 / TT01) (Photorhabdus luminescens subsp. laumondii).